The sequence spans 215 residues: Dual specificity phosphatase 29 (215 aa).

Positions 53-201 (HVNEVWPRLH…LRELDKQLVK (149 aa)) constitute a Tyrosine-protein phosphatase domain. 145 to 152 (HCAMGRSR) provides a ligand contact to substrate. The active-site Phosphocysteine intermediate is the Cys-146.

This sequence belongs to the protein-tyrosine phosphatase family. Non-receptor class dual specificity subfamily. Homodimer. Interacts with PRKAA2. Skeletal muscle, liver and adipose tissue.

Its subcellular location is the cytoplasm. It is found in the nucleus. The catalysed reaction is O-phospho-L-tyrosyl-[protein] + H2O = L-tyrosyl-[protein] + phosphate. It carries out the reaction O-phospho-L-seryl-[protein] + H2O = L-seryl-[protein] + phosphate. The enzyme catalyses O-phospho-L-threonyl-[protein] + H2O = L-threonyl-[protein] + phosphate. Its function is as follows. Dual specificity phosphatase able to dephosphorylate phosphotyrosine, phosphoserine and phosphothreonine residues within the same substrate, with a preference for phosphotyrosine as a substrate. Involved in the modulation of intracellular signaling cascades. In skeletal muscle regulates systemic glucose homeostasis by activating, AMPK, an energy sensor protein kinase. Affects MAP kinase signaling though modulation of the MAPK1/2 cascade in skeletal muscle promoting muscle cell differentiation, development and atrophy. In Mus musculus (Mouse), this protein is Dual specificity phosphatase 29.